The chain runs to 148 residues: Large ribosomal subunit protein uL15 (148 aa).

The tract at residues 1 to 50 (MNLSNLKPAEGSTKTRKRIGRGPGSGLGGTSTRGHKGAKSRSGYSKKIGF) is disordered. Residues 21–31 (RGPGSGLGGTS) show a composition bias toward gly residues.

It belongs to the universal ribosomal protein uL15 family. In terms of assembly, part of the 50S ribosomal subunit.

Functionally, binds to the 23S rRNA. This is Large ribosomal subunit protein uL15 from Bacteroides fragilis (strain ATCC 25285 / DSM 2151 / CCUG 4856 / JCM 11019 / LMG 10263 / NCTC 9343 / Onslow / VPI 2553 / EN-2).